A 388-amino-acid chain; its full sequence is MRIWKSHPLFSLVNGYLIDSPQPSNLSYLWNFGSLLGFCLVIQIVTGVTLAMHYNPSVSEAFNSVEHIMRDVNNGWLIRYLHSNTASAFFFLVYLHVGRGLYYGSYKAPRTLTWTIGTIILVLMMATAFLGYVLPYGQMSLWGATVITNLLSAIPWVGQDIVEFVWGGFSVNNATLNRFFALHFVLPFVLAALVLMHLIALHDTAGSGNPLGVSGNYDRLPFAPYFIFKDLITIFLFIIVLSIFIFFMPNVLGDSENYVMANPMQTPPAIVPEWYLLPFYAILRSIPNKLLGVIAMFSAILIIMIMPITDLGRSRGLQFRPLSKITFYIFVANFLVLMQLGANHVESPFIEFGQISTVLYFSHFLIIVPLVSLIENTLVDMHLNNTIT.

4 consecutive transmembrane segments (helical) span residues 32-52 (FGSL…TLAM), 76-98 (WLIR…LHVG), 113-133 (TWTI…LGYV), and 179-199 (FFAL…MHLI). Heme b-binding residues include His-82 and His-96. 2 residues coordinate heme b: His-183 and His-197. His-202 provides a ligand contact to a ubiquinone. The next 4 membrane-spanning stretches (helical) occupy residues 226-246 (FIFK…IFIF), 290-310 (LLGV…PITD), 322-342 (LSKI…QLGA), and 349-369 (FIEF…IIVP).

This sequence belongs to the cytochrome b family. Fungal cytochrome b-c1 complex contains 10 subunits; 3 respiratory subunits, 2 core proteins and 5 low-molecular weight proteins. Cytochrome b-c1 complex is a homodimer. It depends on heme b as a cofactor.

It localises to the mitochondrion inner membrane. Functionally, component of the ubiquinol-cytochrome c reductase complex (complex III or cytochrome b-c1 complex) that is part of the mitochondrial respiratory chain. The b-c1 complex mediates electron transfer from ubiquinol to cytochrome c. Contributes to the generation of a proton gradient across the mitochondrial membrane that is then used for ATP synthesis. This Zymoseptoria tritici (Speckled leaf blotch fungus) protein is Cytochrome b (cob).